Reading from the N-terminus, the 335-residue chain is Zinc-type alcohol dehydrogenase-like protein SAR2277 (335 aa).

It belongs to the zinc-containing alcohol dehydrogenase family. Quinone oxidoreductase subfamily.

This chain is Zinc-type alcohol dehydrogenase-like protein SAR2277, found in Staphylococcus aureus (strain MRSA252).